The chain runs to 364 residues: Probable UDP-arabinopyranose mutase 1 (364 aa).

The DXD motif motif lies at 110–112; it reads DDD. An N-linked (Glc...) arginine glycan is attached at arginine 158.

Belongs to the RGP family. As to quaternary structure, homopentamer or homohexamer. Mn(2+) is required as a cofactor. The cofactor is Mg(2+). Reversibly glycosylated by UDP-glucose, UDP-xylose and UDP-galactose.

It is found in the secreted. It localises to the cell wall. Its subcellular location is the cell junction. The protein resides in the plasmodesma. The protein localises to the golgi apparatus. It catalyses the reaction UDP-beta-L-arabinofuranose = UDP-beta-L-arabinopyranose. Its function is as follows. Probable UDP-L-arabinose mutase involved in the biosynthesis of cell wall non-cellulosic polysaccharides. Was initially shown to possess an autoglycosylating activity which is dependent on the presence of UDP-glucose and manganese. This is Probable UDP-arabinopyranose mutase 1 from Zea mays (Maize).